An 85-amino-acid polypeptide reads, in one-letter code: Anti-neuroexcitation peptide 2 (85 aa).

The signal sequence occupies residues 1–21; sequence MKLSLLLVISASMLIDGLVNA. The 61-residue stretch at 22–82 folds into the LCN-type CS-alpha/beta domain; it reads DGYIRGSNGC…TWKSESNTCG (61 aa). 4 disulfides stabilise this stretch: C31–C81, C35–C56, C42–C63, and C46–C65.

It belongs to the long (4 C-C) scorpion toxin superfamily. Sodium channel inhibitor family. Beta subfamily. As to expression, expressed by the venom gland.

It localises to the secreted. In terms of biological role, binds to sodium channels (Nav) and inhibits them. Recombinant ANEP delays the convulsion seizure of insect models by 18% and shows anti-neuroexcitatory activity. The polypeptide is Anti-neuroexcitation peptide 2 (Olivierus martensii (Manchurian scorpion)).